The chain runs to 151 residues: Protein SprT-like (151 aa).

In terms of domain architecture, SprT-like spans Leu6 to Lys148. His67 contacts Zn(2+). The active site involves Glu68. His71 is a binding site for Zn(2+).

It belongs to the SprT family. Requires Zn(2+) as cofactor.

The protein resides in the cytoplasm. The protein is Protein SprT-like of Anoxybacillus flavithermus (strain DSM 21510 / WK1).